The primary structure comprises 203 residues: Phosphatidylglycerophosphatase B (203 aa).

A topological domain (cytoplasmic) is located at residue Met-1. A helical membrane pass occupies residues 2-17 (YKPVSLFLFFLILAAA). Topologically, residues 18–55 (IHTNAVQSADEAISKAAVLIRQPWLNEVMTGITHLGAS) are extracellular. Residues 56–74 (SFLLPLIVIIGAGMFFYRK) form a helical membrane-spanning segment. The Cytoplasmic segment spans residues 75 to 78 (TWDG). The helical transmembrane segment at 79 to 99 (LLMLLVFGTDRLLNKVLKEWI) threads the bilayer. A phosphatase sequence motif I region spans residues 96-104 (KEWIERVRP). The Extracellular segment spans residues 100–119 (ERVRPDFAPLVHESSFSFPS). Positions 118-121 (PSGH) are phosphatase sequence motif II. The helical transmembrane segment at 120–139 (GHSMNAACVYPVIAYFLVKH) threads the bilayer. His-121 acts as the Proton donors in catalysis. Topologically, residues 140–146 (LPFLSKH) are cytoplasmic. A helical transmembrane segment spans residues 147 to 167 (KKMVYIIAGVIAVLVGISRVY). Residues 164 to 175 (SRVYLGVHFVTD) are phosphatase sequence motif III. Over 168 to 172 (LGVHF) the chain is Extracellular. The active-site Nucleophile is His-171. A helical membrane pass occupies residues 173–196 (VTDVLGGFSLGLLLFFLVKGFDEK). At 197-203 (IKRFRQK) the chain is on the cytoplasmic side.

The protein belongs to the PA-phosphatase related phosphoesterase family.

The protein resides in the cell membrane. It carries out the reaction a 1,2-diacyl-sn-glycero-3-phospho-(1'-sn-glycero-3'-phosphate) + H2O = a 1,2-diacyl-sn-glycero-3-phospho-(1'-sn-glycerol) + phosphate. Its function is as follows. Catalyzes the dephosphorylation of phosphatidylglycerophosphate (PGP) to phosphatidylglycerol. Also has undecaprenyl pyrophosphate phosphatase activity, required for the biosynthesis of the lipid carrier undecaprenyl phosphate. This Bacillus subtilis (strain 168) protein is Phosphatidylglycerophosphatase B.